The chain runs to 364 residues: FNIP repeat-containing protein DDB_G0277323 (364 aa).

5 FNIP repeats span residues 57-98 (MNIE…DLKY), 155-198 (YDCL…FGWT), 214-244 (LRVLKFGVSFNTEIQCNVLPNSIEKITFGSS), 245-271 (FNQVILPNSLPRNLRILKFGSSFNQPI), and 295-340 (FNQP…FINN).

The chain is FNIP repeat-containing protein DDB_G0277323 from Dictyostelium discoideum (Social amoeba).